We begin with the raw amino-acid sequence, 1426 residues long: Protein RhsD (1426 aa).

The interval 256 to 285 (AEEARTSSLSSSDSSRPLSASAFPDTLPGT) is disordered. A compositionally biased stretch (low complexity) spans 262–277 (SSLSSSDSSRPLSASA). The segment at 320 to 1197 (YTEAGELLAV…LNEENPHHVY (878 aa)) is 28 X approximate tandem repeats. A run of 27 repeats spans residues 334 to 356 (NTQV…HRYA), 357 to 378 (GRPE…LNPA), 379 to 421 (GLSY…ELAD), 422 to 442 (GSVT…TDAA), 443 to 464 (GRRT…TTPD), 465 to 485 (GRET…VSPD), 486 to 506 (GLES…TSRS), 507 to 529 (GETV…TDAT), 530 to 550 (GSTR…TDCS), 551 to 571 (GYQT…HREE), 572 to 592 (GISL…KDAQ), 593 to 613 (GRET…ITPD), 614 to 633 (GNRS…TTQG), 634 to 654 (GLTR…TNEN), 655 to 675 (GSHS…GGFD), 676 to 695 (GRTQ…SEDE), 696 to 715 (GLVI…RTVN), 716 to 738 (GEPA…HLSE), 739 to 762 (GHRV…QTVE), 812 to 832 (GGTP…VRSF), 833 to 861 (GSMA…HLNS), 862 to 882 (LVYD…ISGP), 883 to 905 (RQTR…LAPD), 906 to 941 (LDIR…NRIA), 942 to 970 (EDAH…VIRT), 971 to 995 (DDER…IQHG), and 996 to 1030 (EPLV…MSLS). The segment covering 1073-1085 (ENGEREKAQRRSL) has biased composition (basic and acidic residues). Residues 1073–1097 (ENGEREKAQRRSLAETLQQEGSENG) form a disordered region. Residues 1173–1197 (GNTAWSAEYDEWGNQLNEENPHHVY) form repeat 28.

This sequence belongs to the RHS family.

Its function is as follows. Rhs elements have a nonessential function. They may play an important role in the natural ecology of the cell. In Escherichia coli (strain K12), this protein is Protein RhsD (rhsD).